Consider the following 377-residue polypeptide: tRNA pseudouridine synthase B (377 aa).

Asp-53 acts as the Nucleophile in catalysis.

Belongs to the pseudouridine synthase TruB family. Type 1 subfamily.

The enzyme catalyses uridine(55) in tRNA = pseudouridine(55) in tRNA. In terms of biological role, responsible for synthesis of pseudouridine from uracil-55 in the psi GC loop of transfer RNAs. This chain is tRNA pseudouridine synthase B, found in Tropheryma whipplei (strain Twist) (Whipple's bacillus).